We begin with the raw amino-acid sequence, 351 residues long: Phosphate acyltransferase (351 aa).

Belongs to the PlsX family. In terms of assembly, homodimer. Probably interacts with PlsY.

The protein localises to the cytoplasm. It catalyses the reaction a fatty acyl-[ACP] + phosphate = an acyl phosphate + holo-[ACP]. Its pathway is lipid metabolism; phospholipid metabolism. Functionally, catalyzes the reversible formation of acyl-phosphate (acyl-PO(4)) from acyl-[acyl-carrier-protein] (acyl-ACP). This enzyme utilizes acyl-ACP as fatty acyl donor, but not acyl-CoA. This chain is Phosphate acyltransferase, found in Paramagnetospirillum magneticum (strain ATCC 700264 / AMB-1) (Magnetospirillum magneticum).